The following is a 103-amino-acid chain: Histone H4 (103 aa).

Residues methionine 1–glycine 14 show a composition bias toward gly residues. Residues methionine 1–arginine 20 are disordered. Serine 2 is modified (N-acetylserine). N6-acetyl-N6-methyllysine; alternate is present on residues lysine 6 and lysine 13. The residue at position 17 (lysine 17) is an N6-acetyllysine. Residues lysine 17 to arginine 21 mediate DNA binding.

The protein belongs to the histone H4 family. In terms of assembly, the nucleosome is a histone octamer containing two molecules each of H2A, H2B, H3 and H4 assembled in one H3-H4 heterotetramer and two H2A-H2B heterodimers. The octamer wraps approximately 147 bp of DNA.

The protein localises to the nucleus. It localises to the chromosome. Core component of nucleosome. Nucleosomes wrap and compact DNA into chromatin, limiting DNA accessibility to the cellular machineries which require DNA as a template. Histones thereby play a central role in transcription regulation, DNA repair, DNA replication and chromosomal stability. DNA accessibility is regulated via a complex set of post-translational modifications of histones, also called histone code, and nucleosome remodeling. The polypeptide is Histone H4 (Mytilus chilensis (Chilean blue mussel)).